We begin with the raw amino-acid sequence, 130 residues long: Small ribosomal subunit protein uS11 (130 aa).

This sequence belongs to the universal ribosomal protein uS11 family. Part of the 30S ribosomal subunit. Interacts with proteins S7 and S18. Binds to IF-3.

In terms of biological role, located on the platform of the 30S subunit, it bridges several disparate RNA helices of the 16S rRNA. Forms part of the Shine-Dalgarno cleft in the 70S ribosome. The polypeptide is Small ribosomal subunit protein uS11 (Prochlorococcus marinus (strain MIT 9301)).